The chain runs to 150 residues: Aspartate 1-decarboxylase 2 (150 aa).

The active-site Schiff-base intermediate with substrate; via pyruvic acid is S24. S24 is modified (pyruvic acid (Ser)). T56 contacts substrate. Y57 functions as the Proton donor in the catalytic mechanism. Position 72 to 74 (72 to 74 (GAA)) interacts with substrate.

The protein belongs to the PanD family. Heterooctamer of four alpha and four beta subunits. It depends on pyruvate as a cofactor. Post-translationally, is synthesized initially as an inactive proenzyme, which is activated by self-cleavage at a specific serine bond to produce a beta-subunit with a hydroxyl group at its C-terminus and an alpha-subunit with a pyruvoyl group at its N-terminus.

Its subcellular location is the cytoplasm. It carries out the reaction L-aspartate + H(+) = beta-alanine + CO2. It participates in cofactor biosynthesis; (R)-pantothenate biosynthesis; beta-alanine from L-aspartate: step 1/1. Catalyzes the pyruvoyl-dependent decarboxylation of aspartate to produce beta-alanine. In Mesorhizobium japonicum (strain LMG 29417 / CECT 9101 / MAFF 303099) (Mesorhizobium loti (strain MAFF 303099)), this protein is Aspartate 1-decarboxylase 2.